A 188-amino-acid polypeptide reads, in one-letter code: GMP synthase [glutamine-hydrolyzing] subunit A (188 aa).

The Glutamine amidotransferase type-1 domain occupies 1-188; that stretch reads MIVILNNGGQ…FCKVCGLLGE (188 aa). C76 acts as the Nucleophile in catalysis. Catalysis depends on residues H163 and E165.

In terms of assembly, heterodimer composed of a glutamine amidotransferase subunit (A) and a GMP-binding subunit (B).

The catalysed reaction is XMP + L-glutamine + ATP + H2O = GMP + L-glutamate + AMP + diphosphate + 2 H(+). It participates in purine metabolism; GMP biosynthesis; GMP from XMP (L-Gln route): step 1/1. Catalyzes the synthesis of GMP from XMP. The chain is GMP synthase [glutamine-hydrolyzing] subunit A from Methanococcus aeolicus (strain ATCC BAA-1280 / DSM 17508 / OCM 812 / Nankai-3).